The chain runs to 448 residues: Glucose-6-phosphate isomerase (448 aa).

Residue Glu288 is the Proton donor of the active site. Residues His309 and Lys423 contribute to the active site.

This sequence belongs to the GPI family.

The protein resides in the cytoplasm. It catalyses the reaction alpha-D-glucose 6-phosphate = beta-D-fructose 6-phosphate. Its pathway is carbohydrate biosynthesis; gluconeogenesis. It participates in carbohydrate degradation; glycolysis; D-glyceraldehyde 3-phosphate and glycerone phosphate from D-glucose: step 2/4. Its function is as follows. Catalyzes the reversible isomerization of glucose-6-phosphate to fructose-6-phosphate. This chain is Glucose-6-phosphate isomerase, found in Fusobacterium nucleatum subsp. nucleatum (strain ATCC 25586 / DSM 15643 / BCRC 10681 / CIP 101130 / JCM 8532 / KCTC 2640 / LMG 13131 / VPI 4355).